Reading from the N-terminus, the 1104-residue chain is Ankyrin repeat- and BTB/POZ domain-containing protein 3 (1104 aa).

A helical membrane pass occupies residues 168–188 (IVLSWGLAAHCTAAALAALSL). Positions 260–301 (SCSGPGSGSGSGPGPSSGPGAAPAADKEREAPGGGAASGGAC) are disordered. A compositionally biased stretch (gly residues) spans 264–276 (PGSGSGSGPGPSS). ANK repeat units lie at residues 603 to 632 (QGMT…DLNV), 649 to 678 (RHWT…KVEG), 687 to 716 (YSET…DPLI), 730 to 759 (GDMN…KEKS), and 825 to 854 (TWLE…TIQE). The region spanning 923–989 (SDVTFLVEGR…LYYGGPESLL (67 aa)) is the BTB domain.

It localises to the membrane. The chain is Ankyrin repeat- and BTB/POZ domain-containing protein 3 from Homo sapiens (Human).